The following is a 351-amino-acid chain: Methionine import ATP-binding protein MetN (351 aa).

The region spanning 2-238 (IKLNHINKTY…PKHPITRELI (237 aa)) is the ABC transporter domain. An ATP-binding site is contributed by 35 to 42 (GYSGAGKS).

This sequence belongs to the ABC transporter superfamily. Methionine importer (TC 3.A.1.24) family. In terms of assembly, the complex is composed of two ATP-binding proteins (MetN), two transmembrane proteins (MetI) and a solute-binding protein (MetQ).

Its subcellular location is the cell inner membrane. It carries out the reaction L-methionine(out) + ATP + H2O = L-methionine(in) + ADP + phosphate + H(+). The enzyme catalyses D-methionine(out) + ATP + H2O = D-methionine(in) + ADP + phosphate + H(+). In terms of biological role, part of the ABC transporter complex MetNIQ involved in methionine import. Responsible for energy coupling to the transport system. The protein is Methionine import ATP-binding protein MetN of Helicobacter hepaticus (strain ATCC 51449 / 3B1).